Reading from the N-terminus, the 2080-residue chain is Dedicator of cytokinesis protein 6 (2080 aa).

Basic and acidic residues predominate over residues 20 to 31 (EVRKQVSRERSG). 3 disordered regions span residues 20 to 44 (EVRK…SSLG), 156 to 189 (QDTP…SGAS), and 408 to 441 (PQDR…GDDA). Positions 32–42 (SPHSSRRSSSS) are enriched in low complexity. Serine 178 is subject to Phosphoserine. The segment covering 408-425 (PQDRDSDSEGERRPTWAE) has biased composition (basic and acidic residues). Residues 546–712 (RNLLFVYPHS…GVFSVELTAV (167 aa)) form the C2 DOCK-type domain. Arginine 863 is subject to Omega-N-methylarginine. Phosphoserine occurs at positions 870, 878, and 882. The segment at 1101–1123 (ASPSPSVSSTTSQSSTFSSQAPD) is disordered. Positions 1104 to 1122 (SPSVSSTTSQSSTFSSQAP) are enriched in low complexity. Serine 1341 is modified (phosphoserine). The DOCKER domain maps to 1620 to 2056 (RGYQGSPDLR…LQPLLTQRLP (437 aa)). A Phosphothreonine modification is found at threonine 2064. Residues serine 2065 and serine 2069 each carry the phosphoserine modification.

It belongs to the DOCK family. Widely expressed with highest levels in lung and heart.

The protein localises to the cytoplasm. It is found in the perinuclear region. In terms of biological role, acts as a guanine nucleotide exchange factor (GEF) for CDC42 and RAC1 small GTPases. Through its activation of CDC42 and RAC1, regulates neurite outgrowth in an vitro differentiation system. This is Dedicator of cytokinesis protein 6 (Dock6) from Mus musculus (Mouse).